Here is a 409-residue protein sequence, read N- to C-terminus: Gamma-glutamyl phosphate reductase (409 aa).

Belongs to the gamma-glutamyl phosphate reductase family.

Its subcellular location is the cytoplasm. It carries out the reaction L-glutamate 5-semialdehyde + phosphate + NADP(+) = L-glutamyl 5-phosphate + NADPH + H(+). It functions in the pathway amino-acid biosynthesis; L-proline biosynthesis; L-glutamate 5-semialdehyde from L-glutamate: step 2/2. Its function is as follows. Catalyzes the NADPH-dependent reduction of L-glutamate 5-phosphate into L-glutamate 5-semialdehyde and phosphate. The product spontaneously undergoes cyclization to form 1-pyrroline-5-carboxylate. The chain is Gamma-glutamyl phosphate reductase from Koribacter versatilis (strain Ellin345).